Here is an 89-residue protein sequence, read N- to C-terminus: Small ribosomal subunit protein uS15 (89 aa).

This sequence belongs to the universal ribosomal protein uS15 family. In terms of assembly, part of the 30S ribosomal subunit. Forms a bridge to the 50S subunit in the 70S ribosome, contacting the 23S rRNA.

One of the primary rRNA binding proteins, it binds directly to 16S rRNA where it helps nucleate assembly of the platform of the 30S subunit by binding and bridging several RNA helices of the 16S rRNA. In terms of biological role, forms an intersubunit bridge (bridge B4) with the 23S rRNA of the 50S subunit in the ribosome. The polypeptide is Small ribosomal subunit protein uS15 (Paracoccus denitrificans (strain Pd 1222)).